Consider the following 796-residue polypeptide: MQSIIGKHKDEGKITPEYLKKIDAYWRAANFISVGQLYLLDNPLLREPLKPEHLKRKVVGHWGTIPGQNFIYAHLNRVIKKYDLDMIYVSGPGHGGQVMVSNSYLDGTYSEVYPNVSRDLNGLKKLCKQFSFPGGISSHMAPETPGSINEGGELGYSLAHSFGAVFDNPDLITACVVGDGEAETGPLATSWQANKFLNPVTDGAVLPILHLNGYKISNPTVLSRIPKDELEKFFEGNGWKPYFVEGEDPETMHKLMAETLDIVTEEILNIQKNARENNDCSRPKWPMIVLRTPKGWTGPKFVDGVPNEGSFRAHQVPLAVDRYHTENLDQLEEWLKSYKPEELFDENYRLIPELEELTPKGNKRMAANLHANGGLLLRELRTPDFRDYAVDVPTPGSTVKQDMIELGKYVRDVVKLNEDTRNFRIFGPDETMSNRLWAVFEGTKRQWLSEIKEPNDEFLSNDGRIVDSMLSEHLCEGWLEGYLLTGRHGFFASYEAFLRIVDSMITQHGKWLKVTSQLPWRKDIASLNLIATSNVWQQDHNGYTHQDPGLLGHIVDKKPEIVRAYLPADANTLLAVFDKCLHTKHKINLLVTSKHPRQQWLTMDQAVKHVEQGISIWDWASNDKGQEPDVVIASCGDTPTLEALAAVTILHEHLPELKVRFVNVVDMMKLLPENEHPHGLSDKDYNALFTTDKPVIFAFHGFAHLINQLTYHRENRNLHVHGYMEEGTITTPFDMRVQNKLDRFNLVKDVVENLPQLGNRGAHLVQLMNDKLVEHNQYIREVGEDLPEITNWQWHV.

This sequence belongs to the XFP family. Thiamine diphosphate is required as a cofactor.

The polypeptide is Probable phosphoketolase (Clostridium acetobutylicum (strain ATCC 824 / DSM 792 / JCM 1419 / IAM 19013 / LMG 5710 / NBRC 13948 / NRRL B-527 / VKM B-1787 / 2291 / W)).